The following is a 62-amino-acid chain: uncharacterized protein (62 aa).

This is an uncharacterized protein from Dictyostelium discoideum (Social amoeba).